A 361-amino-acid polypeptide reads, in one-letter code: Queuine tRNA-ribosyltransferase (361 aa).

The active-site Proton acceptor is the Asp-92. Residues Asp-92–Phe-96, Asp-146, Gln-189, and Gly-216 each bind substrate. Positions Gly-247–Asp-253 are RNA binding. Residue Asp-266 is the Nucleophile of the active site. An RNA binding; important for wobble base 34 recognition region spans residues Thr-271–Arg-275. The Zn(2+) site is built by Cys-304, Cys-306, Cys-309, and His-335.

The protein belongs to the queuine tRNA-ribosyltransferase family. As to quaternary structure, homodimer. Within each dimer, one monomer is responsible for RNA recognition and catalysis, while the other monomer binds to the replacement base PreQ1. The cofactor is Zn(2+).

It carries out the reaction 7-aminomethyl-7-carbaguanine + guanosine(34) in tRNA = 7-aminomethyl-7-carbaguanosine(34) in tRNA + guanine. It participates in tRNA modification; tRNA-queuosine biosynthesis. Its function is as follows. Catalyzes the base-exchange of a guanine (G) residue with the queuine precursor 7-aminomethyl-7-deazaguanine (PreQ1) at position 34 (anticodon wobble position) in tRNAs with GU(N) anticodons (tRNA-Asp, -Asn, -His and -Tyr). Catalysis occurs through a double-displacement mechanism. The nucleophile active site attacks the C1' of nucleotide 34 to detach the guanine base from the RNA, forming a covalent enzyme-RNA intermediate. The proton acceptor active site deprotonates the incoming PreQ1, allowing a nucleophilic attack on the C1' of the ribose to form the product. After dissociation, two additional enzymatic reactions on the tRNA convert PreQ1 to queuine (Q), resulting in the hypermodified nucleoside queuosine (7-(((4,5-cis-dihydroxy-2-cyclopenten-1-yl)amino)methyl)-7-deazaguanosine). This is Queuine tRNA-ribosyltransferase from Rickettsia rickettsii (strain Iowa).